Here is a 712-residue protein sequence, read N- to C-terminus: MDRPPSLPHYQNPNPNLFYHYPPPNSNPNFFFRPPPPPLQNPNNYSIVPSPPPIRELSGTLSSLKSLLSECQRTLDSLSQNLALDHSSLLQKDENGCFVRCPFDSNHFMPPEALFLHSLRCPNTLDLIHLLESFSSYRNTLELPCELQLNNGDGDLCISLDDLADFGSNFFYRDCPGAVKFSELDGKKRTLTLPHVLSVECSDFVGSDEKVKKIVLDKCLGVLPSDLCAMKNEIDQWRDFPSSYSSSVLSSIVGSKVVEISALRKWILVNSTRYGVIIDTFMRDHIFLLFRLCLKSAVKEACGFRMESDATDVGEQKIMSCKSSTFECPVFIQVLSWLASQLAVLYGEGNGKFFALDMFKQCIVESASQVMLFRLEGTRSKCSGVVEDLDDARLRNKDVIMEKPFENSSGGECGKTLDSPQVISVSRVSAAVAALYERSLLEEKIRAVRYAQPLTRYQRAAELGFMTAKADEERNRRCSYRPIIDHDGRPRQRSLNQDMDKMKTREELLAEERDYKRRRMSYRGKKVKRTPRQVLHDMIEEYTEEIKLAGGIGCFEKGMPLQSRSPIGNDQKESDFGYSIPSTDKQWKGENRADIEYPIDNRQNSDKVKRHDEYDSGSSQRQQSHRSYKHSDRRDDKLRDRRKDKHNDRRDDEFTRTKRHSIEGESYQNYRSSREKSSSDYKTKRDDPYDRRSQQPRNQNLFEDRYIPTEKE.

The segment at 98 to 125 (FVRCPFDSNHFMPPEALFLHSLRCPNTL) adopts a CHHC U11-48K-type zinc-finger fold. Zn(2+) contacts are provided by Cys-101, His-107, His-117, and Cys-121. Positions 562–712 (QSRSPIGNDQ…EDRYIPTEKE (151 aa)) are disordered. Composition is skewed to basic and acidic residues over residues 585 to 595 (KQWKGENRADI), 603 to 614 (QNSDKVKRHDEY), 629 to 663 (KHSDRRDDKLRDRRKDKHNDRRDDEFTRTKRHSIE), 672 to 693 (SSREKSSSDYKTKRDDPYDRRS), and 702 to 712 (FEDRYIPTEKE).

In terms of assembly, component of the U11/U12 snRNPs that are part of the U12-type spliceosome. Not found in the major spliceosome.

It localises to the nucleus. In terms of biological role, likely involved in U12-type 5' splice site recognition. The chain is U11/U12 small nuclear ribonucleoprotein 48 kDa protein (SNRNP48) from Arabidopsis thaliana (Mouse-ear cress).